A 331-amino-acid polypeptide reads, in one-letter code: Vitamin B12 import system permease protein BtuC (331 aa).

9 consecutive transmembrane segments (helical) span residues 20-42 (VMLAVLLVLSALYLMVGEVFLSP), 62-84 (LVAAMVIGAALAVSGATLQVLLG), 91-113 (GVLGISGGASLAMVIALFLLPVM), 117-136 (TVFMLAAIIGALVFTLILVG), 148-170 (MLLVGVALGILSGAFVTWAFYFS), 190-209 (SWHHHLVTLVLLPVLVWLCL), 240-262 (LAISILIGCAVALGGIISFVGLV), 277-296 (FLLPLSAFAGATLLVFSDIW), and 303-325 (SAELPLGVMTTTIGAPIFIWMLI).

It belongs to the binding-protein-dependent transport system permease family. FecCD subfamily. In terms of assembly, the complex is composed of two ATP-binding proteins (BtuD), two transmembrane proteins (BtuC) and a solute-binding protein (BtuF).

It localises to the cell inner membrane. Part of the ABC transporter complex BtuCDF involved in vitamin B12 import. Involved in the translocation of the substrate across the membrane. This chain is Vitamin B12 import system permease protein BtuC, found in Vibrio vulnificus (strain CMCP6).